Reading from the N-terminus, the 1056-residue chain is PAX-interacting protein 1 (1056 aa).

2 BRCT domains span residues 8 to 93 (VPEE…GFSP) and 94 to 183 (ESCQ…FYHP). Residues 94-183 (ESCQIFFGLT…RRKDEAFYHP (90 aa)) are interaction with PAGR1. Acidic residues predominate over residues 188 to 205 (YEEEEEEEEEGDNEEQDS). Disordered stretches follow at residues 188–276 (YEEE…QRRL), 393–412 (THVL…HPAL), and 419–486 (MQLQ…FQQQ). Low complexity predominate over residues 214–223 (SSVASSAVAS). A phosphoserine mark is found at serine 223 and serine 230. 3 stretches are compositionally biased toward low complexity: residues 396–412 (LQQH…HPAL), 419–435 (MQLQ…QQQP), and 445–486 (QFPQ…FQQQ). The segment at 577 to 1056 (QLFGHDPAVE…TLDYESYKFN (480 aa)) is interaction with TP53BP1. 4 consecutive BRCT domains span residues 588-681 (PEES…RALH), 688-776 (PGGK…VQYS), 853-934 (TPLV…NYIL), and 955-989 (HVSP…GGKV). Residues 655 to 672 (RKRCVTAHWLNTVLKKKK) carry the Nuclear localization signal motif.

In terms of assembly, interacts with the C-terminal transactivation domain of PAX2. Forms a constitutive complex with PAGR1 independently of the MLL2/MLL3 complex. Interacts with TP53BP1 (when phosphorylated at the N-terminus by ATM). Interacts with HLTF. Component of the KMT2 family MLL2/MLL3 complex (also named ASCOM complex), at least composed of the HMTs KMT2D and/or KMT2C, the common subunits ASH2L, RBBP5, WDR5 and DPY30, and the complex type-specific subunits PAXIP1/PTIP, PAGR1, NCOA6 and KDM6A; required for the association of PAGR1 with the MLL2/MLL3 complex. Interacts with NUPR1; this interaction prevents PAXIP1 inhibition of PAX2 transcription factor activity. Expression detected in all tissues examined, including brain stem, cerebellum, cortex, heart, spleen, kidney, liver, thymus and lung.

It localises to the nucleus matrix. Its subcellular location is the chromosome. In terms of biological role, involved in DNA damage response and in transcriptional regulation through histone methyltransferase (HMT) complexes such as the MLL2/MLL3 complex. Plays a role in early development. In DNA damage response is required for cell survival after ionizing radiation. In vitro shown to be involved in the homologous recombination mechanism for the repair of double-strand breaks (DSBs). Its localization to DNA damage foci requires Rnf8 and Ube2n. Recruits Tp53bp1 to DNA damage foci and, at least in particular repair processes, effective DNA damage response appears to require the association with Tp53bp1 phosphorylated by Atm. Together with Tp53bp1 regulates Atm association. Proposed to recruit Pagr1 to sites of DNA damage and the Pagr1:Paxip1 complex is required for cell survival in response to DNA damage independently of the MLL2/MLL3 complex. However, this function has been questioned. Promotes ubiquitination of PCNA following UV irradiation and may regulate recruitment of polymerase eta and Rad51 to chromatin after DNA damage. Proposed to be involved in transcriptional regulation by linking MLL-containing histone methyltransferase (HMT) complexes to gene promoters by interacting with promoter-bound transcription factors such as Pax2. Associates with gene promoters that are known to be regulated by Kmt2d/Mll2. During immunoglobulin class switching in activated B-cells is involved in trimethylation of histone H3 at 'Lys-4' and in transcription initiation of downstream switch regions at the immunoglobulin heavy-chain (Igh) locus; this function appears to involve the recruitment of MLL-containing HMT complexes. Conflictingly, its function in transcriptional regulation during immunoglobulin class switching is reported to be independent of the MLL2/MLL3 complex. The sequence is that of PAX-interacting protein 1 (Paxip1) from Mus musculus (Mouse).